A 337-amino-acid chain; its full sequence is MTMIRKFKLYQYSIPVDSQLILRNRFLKKREGLLVQVCCDDAQGWGEIAPLPEFSQETLEQAREQALAWLEEWSASDGSAGKLPLEHLFPSVAFGLSCALAEMKGLLHEEGNYQVAPLCYGDPDELYDPLNQMQGEKVAKIKVGMYEANRDGLIADMLLEAIPDLHLRLDANRSWTPSKAQMFAKYVKPEHRARIQFLEEPCKTPAESLQFAEETGIAIAWDETVRDAEFQQNPPHFFTPQVKAIVIKPTLVGSIQRCVELIKQAHAHGIQAVISSSIESSLGLTQLARLAQQYTPNTVPGLDTLDLMDYQVIRPWPSSTLPLIDLDSEYIVPIKLD.

K142 serves as the catalytic Proton donor. Residues D170, E199, and D222 each coordinate Mg(2+). The active-site Proton acceptor is the K248.

Belongs to the mandelate racemase/muconate lactonizing enzyme family. MenC type 1 subfamily. A divalent metal cation serves as cofactor.

The enzyme catalyses (1R,6R)-6-hydroxy-2-succinyl-cyclohexa-2,4-diene-1-carboxylate = 2-succinylbenzoate + H2O. Its pathway is quinol/quinone metabolism; 1,4-dihydroxy-2-naphthoate biosynthesis; 1,4-dihydroxy-2-naphthoate from chorismate: step 4/7. It participates in quinol/quinone metabolism; menaquinone biosynthesis. Functionally, converts 2-succinyl-6-hydroxy-2,4-cyclohexadiene-1-carboxylate (SHCHC) to 2-succinylbenzoate (OSB). This is o-succinylbenzoate synthase from Pasteurella multocida (strain Pm70).